A 334-amino-acid chain; its full sequence is Ferrochelatase 1 (334 aa).

Fe cation-binding residues include H201 and E282.

The protein belongs to the ferrochelatase family.

It is found in the cytoplasm. The catalysed reaction is heme b + 2 H(+) = protoporphyrin IX + Fe(2+). Its pathway is porphyrin-containing compound metabolism; protoheme biosynthesis; protoheme from protoporphyrin-IX: step 1/1. Catalyzes the ferrous insertion into protoporphyrin IX. The sequence is that of Ferrochelatase 1 from Shewanella oneidensis (strain ATCC 700550 / JCM 31522 / CIP 106686 / LMG 19005 / NCIMB 14063 / MR-1).